A 199-amino-acid chain; its full sequence is UPF0301 protein Vapar_4617 (199 aa).

The protein belongs to the UPF0301 (AlgH) family.

In Variovorax paradoxus (strain S110), this protein is UPF0301 protein Vapar_4617.